The sequence spans 843 residues: DNA-directed RNA polymerase subunit beta' (843 aa).

Residues C70, C72, C85, and C88 each contribute to the Zn(2+) site. The Mg(2+) site is built by D686, D688, and D690.

It belongs to the RNA polymerase beta' chain family. RpoC1 subfamily. In plastids the minimal PEP RNA polymerase catalytic core is composed of four subunits: alpha, beta, beta', and beta''. When a (nuclear-encoded) sigma factor is associated with the core the holoenzyme is formed, which can initiate transcription. The cofactor is Mg(2+). It depends on Zn(2+) as a cofactor.

Its subcellular location is the plastid. It localises to the chloroplast. It carries out the reaction RNA(n) + a ribonucleoside 5'-triphosphate = RNA(n+1) + diphosphate. Functionally, DNA-dependent RNA polymerase catalyzes the transcription of DNA into RNA using the four ribonucleoside triphosphates as substrates. This is DNA-directed RNA polymerase subunit beta' from Trieres chinensis (Marine centric diatom).